The primary structure comprises 186 residues: MVKLAAKCILAGDPTVGKTALAQLFRSDGAHFQKNYTLTTGVDLVVKTVPVPDTGDSVELFIFDSAGKELFSEMLDKLWESPNVLCLVYDVTNEQSFTNCSKWLEKARSQIPGTTLPGVLVGNKTDLAGRRVVDVAQAQAWALGQGLECFETSVKEMENYEAPFHYLAKQFHHLYREKLEVFQALV.

GTP is bound by residues 12-19 (GDPTVGKT), 64-68 (DSAGK), and 123-126 (NKTD).

It belongs to the small GTPase superfamily. Rab family. As to quaternary structure, component of the IFT complex B, at least composed of IFT20, IFT22, IFT25, IFT27, IFT46, IFT52, TRAF3IP1/IFT54, IFT57, IFT74, IFT80, IFT81, and IFT88. Interacts with IFT25. Interacts with IFT70B. Interacts with RABL2/RABL2A; binding is equal in the presence of GTP or GDP. Interacts with IFT88. Interacts with ARL6; recognizes and binds with the GTP-free form of ARL6.

It is found in the cell projection. The protein localises to the cilium. Its subcellular location is the cytoplasm. It localises to the flagellum. In terms of biological role, small GTPase-like component of the intraflagellar transport (IFT) complex B that promotes the exit of the BBSome complex from cilia via its interaction with ARL6. Not involved in entry of the BBSome complex into cilium. Prevents aggregation of GTP-free ARL6. Required for hedgehog signaling. Forms a subcomplex within the IFT complex B with IFT25. Its role in intraflagellar transport is mainly seen in tissues rich in ciliated cells such as kidney and testis. Essential for male fertility, spermiogenesis and sperm flagella formation. Plays a role in the early development of the kidney. May be involved in the regulation of ureteric bud initiation. The chain is Intraflagellar transport protein 27 homolog (IFT27) from Bos taurus (Bovine).